Reading from the N-terminus, the 211-residue chain is Large ribosomal subunit protein uL3 (211 aa).

It belongs to the universal ribosomal protein uL3 family. In terms of assembly, part of the 50S ribosomal subunit. Forms a cluster with proteins L14 and L19.

Its function is as follows. One of the primary rRNA binding proteins, it binds directly near the 3'-end of the 23S rRNA, where it nucleates assembly of the 50S subunit. The sequence is that of Large ribosomal subunit protein uL3 from Halothermothrix orenii (strain H 168 / OCM 544 / DSM 9562).